The chain runs to 93 residues: Putative pterin-4-alpha-carbinolamine dehydratase (93 aa).

The protein belongs to the pterin-4-alpha-carbinolamine dehydratase family.

The catalysed reaction is (4aS,6R)-4a-hydroxy-L-erythro-5,6,7,8-tetrahydrobiopterin = (6R)-L-erythro-6,7-dihydrobiopterin + H2O. This Roseiflexus castenholzii (strain DSM 13941 / HLO8) protein is Putative pterin-4-alpha-carbinolamine dehydratase.